A 226-amino-acid chain; its full sequence is METKKCSKCTEIKPIDKFYKIKNGTKIRSFCKKCDNIMSQSYKNRNKNMISSYNKKYKSKHKKQISDYNKNYNIINREKIQKRQTEQHKVRRKNDPNYKMSITLRNRIYKLLNGSNNKTTKELIGCDYNFFLKWLEFQFDDVMTFDNHGEIWHVDHVSQCNTFDLLDEEQQKLCFHWSNMRPLEKSINLGRPDERDYDDIKKHNKIVRAFLKQIKKNKEKYNFTLL.

It belongs to the mimivirus L246/L426 family.

This is an uncharacterized protein from Acanthamoeba polyphaga mimivirus (APMV).